Here is a 612-residue protein sequence, read N- to C-terminus: Phragmoplastin DRP1D (612 aa).

Position 1 is an N-acetylmethionine (Met-1). Positions 32 to 301 (WEALPSVAVV…LESVIRSRIP (270 aa)) constitute a Dynamin-type G domain. The G1 motif stretch occupies residues 42 to 49 (GGQSSGKS). 45–50 (SSGKSS) provides a ligand contact to GTP. Positions 68–70 (VTR) are G2 motif. A G3 motif region spans residues 143–146 (DLPG). The G4 motif stretch occupies residues 212–215 (TKLD). GTP contacts are provided by residues 213–218 (KLDLMD) and 243–246 (NRSQ). The tract at residues 242–245 (VNRS) is G5 motif. The GED domain maps to 520–612 (FRKIASNVAA…DEIDAAVWVR (93 aa)).

It belongs to the TRAFAC class dynamin-like GTPase superfamily. Dynamin/Fzo/YdjA family. Forms homodimer and may homooligomerize and heterooligomerize to form the phragmoplastin complex. Binds to PHIP1.

The protein resides in the cytoplasm. It localises to the cytoskeleton. It catalyses the reaction GTP + H2O = GDP + phosphate + H(+). Functionally, putative microtubule-associated force-producing protein. Has a GTPase activity. This chain is Phragmoplastin DRP1D, found in Arabidopsis thaliana (Mouse-ear cress).